The sequence spans 315 residues: tRNA dimethylallyltransferase (315 aa).

Position 13–20 (13–20 (GPTAVGKT)) interacts with ATP. 15–20 (TAVGKT) is a binding site for substrate. The interaction with substrate tRNA stretch occupies residues 38–41 (DSMQ).

This sequence belongs to the IPP transferase family. In terms of assembly, monomer. It depends on Mg(2+) as a cofactor.

It carries out the reaction adenosine(37) in tRNA + dimethylallyl diphosphate = N(6)-dimethylallyladenosine(37) in tRNA + diphosphate. Its function is as follows. Catalyzes the transfer of a dimethylallyl group onto the adenine at position 37 in tRNAs that read codons beginning with uridine, leading to the formation of N6-(dimethylallyl)adenosine (i(6)A). The chain is tRNA dimethylallyltransferase from Staphylococcus saprophyticus subsp. saprophyticus (strain ATCC 15305 / DSM 20229 / NCIMB 8711 / NCTC 7292 / S-41).